The chain runs to 299 residues: NAD kinase 1 (299 aa).

Aspartate 62 functions as the Proton acceptor in the catalytic mechanism. NAD(+)-binding positions include 62 to 63 (DG), lysine 67, 143 to 144 (ND), lysine 173, and aspartate 175.

The protein belongs to the NAD kinase family. A divalent metal cation serves as cofactor.

The protein localises to the cytoplasm. The catalysed reaction is NAD(+) + ATP = ADP + NADP(+) + H(+). Functionally, involved in the regulation of the intracellular balance of NAD and NADP, and is a key enzyme in the biosynthesis of NADP. Catalyzes specifically the phosphorylation on 2'-hydroxyl of the adenosine moiety of NAD to yield NADP. The polypeptide is NAD kinase 1 (Prochlorococcus marinus subsp. pastoris (strain CCMP1986 / NIES-2087 / MED4)).